Here is an 865-residue protein sequence, read N- to C-terminus: Rifampicin phosphotransferase (865 aa).

The ATP-binding stretch occupies residues 2 to 314 (SGRLVVDLQD…FHIVQSRPIT (313 aa)). K23, R117, G132, T136, Q183, E297, Q309, and R311 together coordinate ATP. The segment at 327 to 752 (FRVYLSVGHQ…TSEGVALSGA (426 aa)) is rifampicin-binding. Residues 403–430 (ENGEFEPTPAETDGGAPPAGDGAEPDEA) form a disordered region. Over residues 409–424 (PTPAETDGGAPPAGDG) the composition is skewed to low complexity. Positions 765-863 (GLAVSAGTVE…VHGTEGYIEL (99 aa)) are swivel phosphohistidine. The active-site Tele-phosphohistidine intermediate is H823.

The protein belongs to the rifampicin phosphotransferase family.

It catalyses the reaction rifampicin + ATP + H2O = 21-phosphorifampicin + AMP + phosphate + 2 H(+). Its function is as follows. Catalyzes the phosphorylation of rifampicin, also known as rifampin (RIF), leading to its inactivation. Confers high level resistance to a variety of clinically used rifamycin antibiotics. The chain is Rifampicin phosphotransferase from Streptomyces sp.